A 202-amino-acid chain; its full sequence is N-(5'-phosphoribosyl)anthranilate isomerase (202 aa).

This sequence belongs to the TrpF family.

The enzyme catalyses N-(5-phospho-beta-D-ribosyl)anthranilate = 1-(2-carboxyphenylamino)-1-deoxy-D-ribulose 5-phosphate. It participates in amino-acid biosynthesis; L-tryptophan biosynthesis; L-tryptophan from chorismate: step 3/5. In Listeria monocytogenes serotype 4a (strain HCC23), this protein is N-(5'-phosphoribosyl)anthranilate isomerase.